We begin with the raw amino-acid sequence, 125 residues long: Mating factor alpha (125 aa).

The first 22 residues, 1-22 (MKLFTTLSASLIFIHSLGSTRA), serve as a signal peptide directing secretion. N-linked (GlcNAc...) asparagine glycans are attached at residues Asn57 and Asn67.

In Lachancea kluyveri (Yeast), this protein is Mating factor alpha.